A 363-amino-acid polypeptide reads, in one-letter code: tRNA N6-adenosine threonylcarbamoyltransferase (363 aa).

The Fe cation site is built by His-121 and His-125. Substrate contacts are provided by residues 143–147 (LASGG), Asp-176, Gly-189, and Asn-287. Asp-315 is a binding site for Fe cation.

The protein belongs to the KAE1 / TsaD family. Fe(2+) is required as a cofactor.

Its subcellular location is the cytoplasm. It carries out the reaction L-threonylcarbamoyladenylate + adenosine(37) in tRNA = N(6)-L-threonylcarbamoyladenosine(37) in tRNA + AMP + H(+). In terms of biological role, required for the formation of a threonylcarbamoyl group on adenosine at position 37 (t(6)A37) in tRNAs that read codons beginning with adenine. Is involved in the transfer of the threonylcarbamoyl moiety of threonylcarbamoyl-AMP (TC-AMP) to the N6 group of A37, together with TsaE and TsaB. TsaD likely plays a direct catalytic role in this reaction. In Rhodopseudomonas palustris (strain TIE-1), this protein is tRNA N6-adenosine threonylcarbamoyltransferase.